A 500-amino-acid polypeptide reads, in one-letter code: Probable malate:quinone oxidoreductase (500 aa).

It belongs to the MQO family. It depends on FAD as a cofactor.

The enzyme catalyses (S)-malate + a quinone = a quinol + oxaloacetate. The protein operates within carbohydrate metabolism; tricarboxylic acid cycle; oxaloacetate from (S)-malate (quinone route): step 1/1. This Bacillus cereus (strain ZK / E33L) protein is Probable malate:quinone oxidoreductase.